We begin with the raw amino-acid sequence, 798 residues long: Integrin beta-1 (798 aa).

The signal sequence occupies residues 1–20 (MNLQLIFWIGLISSVCCVFG). Residues 21–728 (QADEDRCLKA…ETPECPTGPD (708 aa)) lie on the Extracellular side of the membrane. In terms of domain architecture, PSI spans 26-76 (RCLKANAKSCGECIQAGPNCGWCTNSTFLQEGMPTSARCDDLEALKKKGCH). Disulfide bonds link Cys27–Cys45, Cys35–Cys464, Cys38–Cys64, Cys48–Cys75, Cys207–Cys213, Cys261–Cys301, Cys401–Cys415, Cys435–Cys462, Cys466–Cys486, Cys477–Cys489, Cys491–Cys500, Cys502–Cys533, Cys516–Cys531, Cys525–Cys536, Cys538–Cys553, Cys555–Cys576, Cys560–Cys574, Cys568–Cys579, Cys581–Cys590, Cys592–Cys615, Cys599–Cys613, Cys607–Cys618, Cys620–Cys630, Cys633–Cys636, Cys640–Cys691, Cys646–Cys665, Cys649–Cys661, and Cys699–Cys723. Over residues 75 to 91 (CHPNDTENPRGSKDIKK) the composition is skewed to basic and acidic residues. A disordered region spans residues 75 to 105 (CHPNDTENPRGSKDIKKNKNVTNRSKGTAEK). Asn94 and Asn97 each carry an N-linked (GlcNAc...) asparagine glycan. Positions 140 to 378 (DYPIDLYYLM…QLIIDAYNSL (239 aa)) constitute a VWFA domain. Ser152 and Ser154 together coordinate Mg(2+). Ca(2+) contacts are provided by Ser154, Asp157, Asp158, and Glu189. Positions 207-213 (CTNEQNC) are CX3CL1-binding. N-linked (GlcNAc...) asparagine glycosylation is present at Asn212. Ca(2+) contacts are provided by Asn244, Asp246, Pro248, and Glu249. Glu249 provides a ligand contact to Mg(2+). An N-linked (GlcNAc...) asparagine glycan is attached at Asn269. The interval 295–314 (LPNDGQCHLKNDVYTMSHYY) is CX3CL1-binding. Position 362 (Ala362) interacts with Ca(2+). The segment at 383–465 (ILENSKLPEG…IILQFICECE (83 aa)) is interaction with TMEM182. Asn406 and Asn417 each carry an N-linked (GlcNAc...) asparagine glycan. I-EGF domains are found at residues 466 to 501 (CQGE…RHCE), 502 to 554 (CSTD…KFCE), 555 to 591 (CDNF…SACD), and 592 to 631 (CSLD…PTCE). A glycan (N-linked (GlcNAc...) asparagine) is linked at Asn481. Residue Asn520 is glycosylated (N-linked (GlcNAc...) asparagine). Asn584 carries N-linked (GlcNAc...) asparagine glycosylation. Asn669 is a glycosylation site (N-linked (GlcNAc...) asparagine). The chain crosses the membrane as a helical span at residues 729–749 (IIPIVAGVVAGIVLIGLALLL). Over 750–798 (IWKLLMIIHDRREFAKFEKERMNAKWDTGENPIYKSAVTTVVNPKYEGK) the chain is Cytoplasmic. Positions 762-767 (EFAKFE) are signal for sorting from recycling endosomes; interaction with ACAP1. At Thr777 the chain carries Phosphothreonine. Tyr783 carries the phosphotyrosine modification. Ser785 carries the phosphoserine modification. Positions 785-792 (SAVTTVVN) are interaction with ITGB1BP1. Thr789 carries the post-translational modification Phosphothreonine. N6-acetyllysine; alternate is present on Lys794. Lys794 is covalently cross-linked (Glycyl lysine isopeptide (Lys-Gly) (interchain with G-Cter in SUMO1); alternate).

The protein belongs to the integrin beta chain family. As to quaternary structure, interacts with seprase FAP (seprase); the interaction occurs at the cell surface of invadopodia membrane in a collagen-dependent manner. Heterodimer of an alpha and a beta subunit. Beta-1 associates with either alpha-1, alpha-2, alpha-3, alpha-4, alpha-5, alpha-6, alpha-7, alpha-8, alpha-9, alpha-10, alpha-11 or alpha-V. ITGA6:ITGB1 is found in a complex with CD9; interaction takes place in oocytes and is involved in sperm-egg fusion. Binds LGALS3BP and NMRK2, when associated with alpha-7, but not with alpha-5. Interacts with FLNA, FLNB, FLNC and RANBP9. Interacts with KRT1 in the presence of RACK1 and SRC. Interacts with JAML; integrin alpha-4/beta-1 may regulate leukocyte to endothelial cells adhesion by controlling JAML homodimerization. Interacts with RAB21. Interacts (via the cytoplasmic region) with RAB25 (via the hypervariable C-terminal region). Interacts with MYO10. Interacts with ITGB1BP1 (via C-terminal region); the interaction is a prerequisite for focal adhesion disassembly. Interacts with TLN1; the interaction is prevented by competitive binding of ITGB1BP1. Interacts with ACAP1; required for ITGB1 recycling. Interacts with ASAP3. Interacts with FERMT2; the interaction is inhibited in presence of ITGB1BP1. Interacts with DAB2. Interacts with FGR and HCK. Interacts with alpha-7A and alpha-7B in adult skeletal muscle. Interacts with alpha-7B in cardiomyocytes of adult heart. Interacts with EMP2; the interaction may be direct or indirect and ITGB1 has a heterodimer form. ITGA5:ITGB1 interacts with CCN3. ITGA4:ITGB1 is found in a ternary complex with CX3CR1 and CX3CL1. ITGA5:ITGB1 interacts with FBN1. ITGA5:ITGB1 acts as a receptor for fibronectin FN1 and mediates R-G-D-dependent cell adhesion to FN1. ITGA5:ITGB1 interacts with IL1B. Interacts with MDK. ITGA4:ITGB1 interacts with MDK; this interaction mediates MDK-induced osteoblast cells migration through PXN phosphorylation. ITGA6:ITGB1 interacts with MDK; this interaction mediates MDK-induced neurite-outgrowth. ITGA5:ITGB1 interacts with ACE2. Interacts with TMEM182 and LAMB1. Interacts with tensin TNS3; TNS3 also interacts with PEAK1, thus acting as an adapter molecule to bridge the association of PEAK1 with ITGB1. Interacts with tensin TNS4; the interaction displaces tensin TNS3 from the ITGB1 cytoplasmic tail and promotes ITGB1 stability. Integrin ITGA9:ITGB1 interacts with SPP1/OPN (via N-terminus). Integrin ITGA9:ITGB1 interacts with TNC/TNFN3 (via the 3rd Fibronectin type-III domain). Integrins ITGA4:ITGB1 and ITGA9:ITGB1 interact with SVEP1 (via Sushi domain 21); thereby inhibit Ca(2+) intracellular signaling and as a result repress vasocontraction. ITGA4:ITGB1 and ITGA5:ITGB1 interacts with SELP. Interacts with CD248. ITGA5:ITGB1 interacts with IGFBP1. ITGA4:ITGB1 interacts with BCAM. Interacts with ADGRG6.

Its subcellular location is the cell membrane. It is found in the cell projection. The protein resides in the invadopodium membrane. The protein localises to the ruffle membrane. It localises to the recycling endosome. Its subcellular location is the melanosome. It is found in the cell junction. The protein resides in the focal adhesion. The protein localises to the lamellipodium. It localises to the ruffle. In terms of biological role, integrins alpha-1/beta-1, alpha-2/beta-1, alpha-10/beta-1 and alpha-11/beta-1 are receptors for collagen. Integrins alpha-1/beta-1 and alpha-2/beta-2 recognize the proline-hydroxylated sequence G-F-P-G-E-R in collagen. Integrins alpha-2/beta-1, alpha-3/beta-1, alpha-4/beta-1, alpha-5/beta-1, alpha-8/beta-1, alpha-10/beta-1, alpha-11/beta-1 and alpha-V/beta-1 are receptors for fibronectin. Alpha-4/beta-1 recognizes one or more domains within the alternatively spliced CS-1 and CS-5 regions of fibronectin. Integrin alpha-5/beta-1 is a receptor for fibrinogen. Integrin alpha-1/beta-1, alpha-2/beta-1, alpha-6/beta-1 and alpha-7/beta-1 are receptors for lamimin. Integrin alpha-6/beta-1 (ITGA6:ITGB1) is present in oocytes and is involved in sperm-egg fusion. Integrin alpha-4/beta-1 is a receptor for VCAM1 and recognizes the sequence Q-I-D-S in VCAM1. Integrin alpha-9/beta-1 is a receptor for VCAM1, cytotactin and osteopontin. It recognizes the sequence A-E-I-D-G-I-E-L in cytotactin. Integrin alpha-3/beta-1 is a receptor for epiligrin, thrombospondin and CSPG4. Integrin alpha-3/beta-1 provides a docking site for FAP (seprase) at invadopodia plasma membranes in a collagen-dependent manner and hence may participate in the adhesion, formation of invadopodia and matrix degradation processes, promoting cell invasion. Alpha-3/beta-1 may mediate with LGALS3 the stimulation by CSPG4 of endothelial cells migration. Integrin alpha-V/beta-1 is a receptor for vitronectin. Beta-1 integrins recognize the sequence R-G-D in a wide array of ligands. When associated with alpha-7/beta-1 integrin, regulates cell adhesion and laminin matrix deposition. Involved in promoting endothelial cell motility and angiogenesis. Involved in osteoblast compaction through the fibronectin fibrillogenesis cell-mediated matrix assembly process and the formation of mineralized bone nodules. May be involved in up-regulation of the activity of kinases such as PKC via binding to KRT1. Together with KRT1 and RACK1, serves as a platform for SRC activation or inactivation. Plays a mechanistic adhesive role during telophase, required for the successful completion of cytokinesis. ITGA4:ITGB1 binds to fractalkine (CX3CL1) and may act as its coreceptor in CX3CR1-dependent fractalkine signaling. ITGA4:ITGB1 and ITGA5:ITGB1 bind to PLA2G2A via a site (site 2) which is distinct from the classical ligand-binding site (site 1) and this induces integrin conformational changes and enhanced ligand binding to site 1. ITGA5:ITGB1 acts as a receptor for fibrillin-1 (FBN1) and mediates R-G-D-dependent cell adhesion to FBN1. ITGA5:ITGB1 is a receptor for IL1B and binding is essential for IL1B signaling. ITGA5:ITGB3 is a receptor for soluble CD40LG and is required for CD40/CD40LG signaling. Plays an important role in myoblast differentiation and fusion during skeletal myogenesis. ITGA9:ITGB1 may play a crucial role in SVEP1/polydom-mediated myoblast cell adhesion. Integrins ITGA9:ITGB1 and ITGA4:ITGB1 repress PRKCA-mediated L-type voltage-gated channel Ca(2+) influx and ROCK-mediated calcium sensitivity in vascular smooth muscle cells via their interaction with SVEP1, thereby inhibit vasocontraction. The polypeptide is Integrin beta-1 (Camelus bactrianus (Bactrian camel)).